A 406-amino-acid chain; its full sequence is MGSLRVESLLNAFGQSTNINTKSSGDFLAVFLQIFEEIFNAKDGNLFAGKNAKEFAQNFNVNFVPELEKILESNEKLNDTFSNNKVFIEGAKKESFKRLNNPLPEILTFLNQFLKIFQNREVNFIKKTNIQNTRTTTQTTSDSEKGNLNILFTKNLQNLKKALEAFEEIQFNEGNKEKIDKPLKLFSTEEGNVKEFKFFEISKKDKLQISTVNVQEVSLPQDGKGTAHVKQPNKLNNLSELQAVQEKIFKEVSKGETSKTKKSKEFSHSPGVVVELKEWKGKDIPKVQGSEKVFSIKDIRIFEGSERKNVNVKLEGLGIQISFIRDSANLKINLNEMLQNFIFTPYDALKVSQILSSYGFRLESVNVNGSEVYRNREKERVNIKVNELMGEGINSSRSDSNISILL.

This is an uncharacterized protein from Aquifex aeolicus (strain VF5).